Reading from the N-terminus, the 180-residue chain is MTTIISVRRNGHVVIGGDGQATIGNTIMKGNVRKVRRLYYNDKVIAGFAGGTADAFTLFELFERKLESYQGHLVKAAVELAKDWRTDRRLRRLEALLAVADENASLIITGNGDVIQPEKDLIAIGSGGPYAQSAARALLENTNFSAREIVKKSLVIAGDICIYTNQFHTIEELTSTAEGY.

Residue T2 is part of the active site. Na(+) contacts are provided by G158, C161, and T164.

It belongs to the peptidase T1B family. HslV subfamily. A double ring-shaped homohexamer of HslV is capped on each side by a ring-shaped HslU homohexamer. The assembly of the HslU/HslV complex is dependent on binding of ATP.

The protein localises to the cytoplasm. It catalyses the reaction ATP-dependent cleavage of peptide bonds with broad specificity.. With respect to regulation, allosterically activated by HslU binding. Protease subunit of a proteasome-like degradation complex believed to be a general protein degrading machinery. The polypeptide is ATP-dependent protease subunit HslV (Baumannia cicadellinicola subsp. Homalodisca coagulata).